Consider the following 394-residue polypeptide: 1-deoxy-D-xylulose 5-phosphate reductoisomerase (394 aa).

Residues Thr-11, Gly-12, Ser-13, Ile-14, Gly-37, Asn-39, and Asn-126 each contribute to the NADPH site. Lys-127 provides a ligand contact to 1-deoxy-D-xylulose 5-phosphate. Residue Glu-128 participates in NADPH binding. Residue Asp-152 participates in Mn(2+) binding. Residues Ser-153, Glu-154, Ser-178, and His-201 each contribute to the 1-deoxy-D-xylulose 5-phosphate site. Glu-154 is a Mn(2+) binding site. Residue Gly-207 coordinates NADPH. Ser-214, Asn-219, Lys-220, and Glu-223 together coordinate 1-deoxy-D-xylulose 5-phosphate. Glu-223 lines the Mn(2+) pocket.

It belongs to the DXR family. It depends on Mg(2+) as a cofactor. Mn(2+) is required as a cofactor.

The catalysed reaction is 2-C-methyl-D-erythritol 4-phosphate + NADP(+) = 1-deoxy-D-xylulose 5-phosphate + NADPH + H(+). The protein operates within isoprenoid biosynthesis; isopentenyl diphosphate biosynthesis via DXP pathway; isopentenyl diphosphate from 1-deoxy-D-xylulose 5-phosphate: step 1/6. Functionally, catalyzes the NADPH-dependent rearrangement and reduction of 1-deoxy-D-xylulose-5-phosphate (DXP) to 2-C-methyl-D-erythritol 4-phosphate (MEP). The chain is 1-deoxy-D-xylulose 5-phosphate reductoisomerase from Synechocystis sp. (strain ATCC 27184 / PCC 6803 / Kazusa).